Here is a 328-residue protein sequence, read N- to C-terminus: MIEIDGSFGEGGGQILRTAVALSCVTGKAVRIRNIRANRPKPGLAAQHLKGIEAAKIISNAEVEGLRIGSTEIVFNPGSVRGGNFRVDIGTAGSVTLIFQTVLLPLLFADRDSTLTVTGGTDVAWAPPVDYFKNVTLRALREMGAECELEVLKRGYYPKGGGMVRLTVRPAEMKGVVYERIDEIVRGVSHCQNLPGHVAERQASSARNFLEERGIRAEIRTEVLKGLSTGSGIVLWSGYKGGSALGERGKRAEVVGQEAAESLYRELMSDAAFDAHLADQVMPFAAMARGRTEYTTSEVTMHQKSNAYVINTFLGKVVKFEGNKIIIK.

ATP is bound by residues glutamine 100 and 276–280 (HLADQ). The Tele-AMP-histidine intermediate role is filled by histidine 302.

It belongs to the RNA 3'-terminal cyclase family. Type 1 subfamily.

The protein resides in the cytoplasm. It catalyses the reaction a 3'-end 3'-phospho-ribonucleotide-RNA + ATP = a 3'-end 2',3'-cyclophospho-ribonucleotide-RNA + AMP + diphosphate. In terms of biological role, catalyzes the conversion of 3'-phosphate to a 2',3'-cyclic phosphodiester at the end of RNA. The mechanism of action of the enzyme occurs in 3 steps: (A) adenylation of the enzyme by ATP; (B) transfer of adenylate to an RNA-N3'P to produce RNA-N3'PP5'A; (C) and attack of the adjacent 2'-hydroxyl on the 3'-phosphorus in the diester linkage to produce the cyclic end product. The biological role of this enzyme is unknown but it is likely to function in some aspects of cellular RNA processing. This Archaeoglobus fulgidus (strain ATCC 49558 / DSM 4304 / JCM 9628 / NBRC 100126 / VC-16) protein is RNA 3'-terminal phosphate cyclase (rtcA).